The following is a 359-amino-acid chain: sn-1 acyl-lipid omega-3 desaturase (ferredoxin) (359 aa).

Residues 1 to 15 (MQLDTISFNNPLNSE) are compositionally biased toward polar residues. The segment at 1-20 (MQLDTISFNNPLNSETSEDT) is disordered. The next 2 helical transmembrane spans lie at 47–67 (LFYFFRDILIIGLLYAVASYL) and 70–90 (WLFFPIFWLMQGTMFWALFVV). The Histidine box-1 signature appears at 92-96 (HDCGH). The Histidine box-2 signature appears at 128 to 132 (HRTHH). 2 consecutive transmembrane segments (helical) span residues 207–227 (VLLIGMVGLLGFLTYQWGWMW) and 228–248 (LLKYYAVPYLVFIVWLDLVTF). A Histidine box-3 motif is present at residues 294-298 (HHIFL).

The protein belongs to the fatty acid desaturase type 2 family. It depends on Fe(2+) as a cofactor.

The protein localises to the membrane. The enzyme catalyses a 1-[(9Z,12Z)-octadecdienoyl]-2-acyl-glycerolipid + 2 reduced [2Fe-2S]-[ferredoxin] + O2 + 2 H(+) = a 1-[(9Z,12Z,15Z)-octadectrienoyl]-2-acyl-glycerolipid + 2 oxidized [2Fe-2S]-[ferredoxin] + 2 H2O. The catalysed reaction is a 1-[(6Z,9Z,12Z)-octadectrienoyl]-2-acyl-glycerolipid + 2 reduced [2Fe-2S]-[ferredoxin] + O2 + 2 H(+) = a 1-[(6Z,9Z,12Z,15Z)-octadectetraenoyl]-2-acyl-glycerolipid + 2 oxidized [2Fe-2S]-[ferredoxin] + 2 H2O. It participates in lipid metabolism; polyunsaturated fatty acid biosynthesis. In terms of biological role, desaturase involved in fatty acid biosynthesis. Introduces a double bond at carbon 15 of linoleoyl and gamma-linolenoyl groups attached to the sn-1 position of the glycerol moiety of membrane glycerolipids. The polypeptide is sn-1 acyl-lipid omega-3 desaturase (ferredoxin) (Nostoc sp. (strain 36)).